Consider the following 324-residue polypeptide: Adenine deaminase (324 aa).

Residues His-11, His-13, and His-189 each coordinate Zn(2+). Residue Glu-192 is the Proton donor of the active site. Asp-270 contributes to the Zn(2+) binding site. A substrate-binding site is contributed by Asp-271.

Belongs to the metallo-dependent hydrolases superfamily. Adenosine and AMP deaminases family. Adenine deaminase type 2 subfamily. It depends on Zn(2+) as a cofactor.

It carries out the reaction adenine + H2O + H(+) = hypoxanthine + NH4(+). In terms of biological role, catalyzes the hydrolytic deamination of adenine to hypoxanthine. Plays an important role in the purine salvage pathway and in nitrogen catabolism. The chain is Adenine deaminase from Sinorhizobium fredii (strain NBRC 101917 / NGR234).